The primary structure comprises 689 residues: Glycine--tRNA ligase beta subunit (689 aa).

Belongs to the class-II aminoacyl-tRNA synthetase family. In terms of assembly, tetramer of two alpha and two beta subunits.

Its subcellular location is the cytoplasm. It carries out the reaction tRNA(Gly) + glycine + ATP = glycyl-tRNA(Gly) + AMP + diphosphate. This Shewanella putrefaciens (strain CN-32 / ATCC BAA-453) protein is Glycine--tRNA ligase beta subunit.